Here is a 442-residue protein sequence, read N- to C-terminus: Probable serine/threonine-protein kinase PBL17 (442 aa).

A lipid anchor (N-myristoyl glycine) is attached at glycine 2. A lipid anchor (S-palmitoyl cysteine) is attached at cysteine 4. Threonine 79 is subject to Phosphothreonine. The Protein kinase domain maps to 90 to 370 (FRPDYILGEG…NHVVEVLETL (281 aa)). ATP is bound by residues 96 to 104 (LGEGGFGVV) and lysine 125. Tyrosine 170 carries the phosphotyrosine modification. Catalysis depends on aspartate 220, which acts as the Proton acceptor. Position 254 is a phosphoserine (serine 254). 2 positions are modified to phosphothreonine: threonine 255 and threonine 260. Tyrosine 268 is modified (phosphotyrosine). A disordered region spans residues 385–442 (HSRGKSVTLYEASSDSQGTRDGNGQRRRRPESGRSKSEAAVDTEKYVSTLSEPDTTKI). Residues 395–406 (EASSDSQGTRDG) are compositionally biased toward polar residues. Residues 414–429 (PESGRSKSEAAVDTEK) are compositionally biased toward basic and acidic residues. The span at 430–442 (YVSTLSEPDTTKI) shows a compositional bias: polar residues.

It belongs to the protein kinase superfamily. Ser/Thr protein kinase family.

The protein localises to the cell membrane. It catalyses the reaction L-seryl-[protein] + ATP = O-phospho-L-seryl-[protein] + ADP + H(+). The catalysed reaction is L-threonyl-[protein] + ATP = O-phospho-L-threonyl-[protein] + ADP + H(+). Its function is as follows. May be involved in plant defense signaling. This is Probable serine/threonine-protein kinase PBL17 from Arabidopsis thaliana (Mouse-ear cress).